We begin with the raw amino-acid sequence, 144 residues long: L-fucose mutarotase (144 aa).

His-22 functions as the Proton donor in the catalytic mechanism. Substrate-binding positions include Asp-30, Arg-109, and 131-133; that span reads YGN.

Belongs to the RbsD / FucU family. FucU mutarotase subfamily. In terms of assembly, homodecamer.

It localises to the cytoplasm. The enzyme catalyses alpha-L-fucose = beta-L-fucose. Its pathway is carbohydrate metabolism; L-fucose metabolism. Involved in the anomeric conversion of L-fucose. In Actinobacillus pleuropneumoniae serotype 5b (strain L20), this protein is L-fucose mutarotase.